The chain runs to 277 residues: Orotidine 5'-phosphate decarboxylase (277 aa).

Residues D40, 62 to 64 (KTH), 93 to 102 (DRKFIDIGNT), Y229, and R247 each bind substrate. K95 (proton donor) is an active-site residue.

The protein belongs to the OMP decarboxylase family.

The catalysed reaction is orotidine 5'-phosphate + H(+) = UMP + CO2. The protein operates within pyrimidine metabolism; UMP biosynthesis via de novo pathway; UMP from orotate: step 2/2. This is Orotidine 5'-phosphate decarboxylase (pyrG) from Aspergillus awamori (Black koji mold).